The sequence spans 90 residues: Small ribosomal subunit protein uS15 (90 aa).

This sequence belongs to the universal ribosomal protein uS15 family. In terms of assembly, part of the 30S ribosomal subunit. Forms a bridge to the 50S subunit in the 70S ribosome, contacting the 23S rRNA.

In terms of biological role, one of the primary rRNA binding proteins, it binds directly to 16S rRNA where it helps nucleate assembly of the platform of the 30S subunit by binding and bridging several RNA helices of the 16S rRNA. Functionally, forms an intersubunit bridge (bridge B4) with the 23S rRNA of the 50S subunit in the ribosome. The chain is Small ribosomal subunit protein uS15 from Helicobacter pylori (strain J99 / ATCC 700824) (Campylobacter pylori J99).